A 146-amino-acid polypeptide reads, in one-letter code: Hemoglobin subunit beta (146 aa).

Residues 2-146 (HWTAEEKQLI…VAHALARKYH (145 aa)) form the Globin domain. Heme b is bound by residues histidine 63 and histidine 92.

This sequence belongs to the globin family. In terms of assembly, heterotetramer of two alpha chains and two beta chains. As to expression, red blood cells.

Involved in oxygen transport from the lung to the various peripheral tissues. This Branta canadensis (Canada goose) protein is Hemoglobin subunit beta (HBB).